The chain runs to 89 residues: Defensin-like protein 147 (89 aa).

Residues 1–24 (MKKIFQLSFTVFIIFISLVLGVVG) form the signal peptide. 4 cysteine pairs are disulfide-bonded: Cys-34–Cys-82, Cys-46–Cys-66, Cys-51–Cys-79, and Cys-55–Cys-81.

Belongs to the DEFL family. As to expression, expressed in flower buds, but not in stems, roots or rosette leaves.

It localises to the secreted. The protein is Defensin-like protein 147 (LCR1) of Arabidopsis thaliana (Mouse-ear cress).